The following is a 493-amino-acid chain: Cysteine--tRNA ligase (493 aa).

Cys-29 is a Zn(2+) binding site. The short motif at Val-31–His-41 is the 'HIGH' region element. Residues Lys-154–Lys-179 are disordered. Residues Cys-213, His-238, and Glu-242 each coordinate Zn(2+). The short motif at Lys-270–Ser-274 is the 'KMSKS' region element. Lys-273 provides a ligand contact to ATP.

The protein belongs to the class-I aminoacyl-tRNA synthetase family. In terms of assembly, monomer. Requires Zn(2+) as cofactor.

Its subcellular location is the cytoplasm. It catalyses the reaction tRNA(Cys) + L-cysteine + ATP = L-cysteinyl-tRNA(Cys) + AMP + diphosphate. This chain is Cysteine--tRNA ligase, found in Synechococcus sp. (strain CC9605).